A 174-amino-acid chain; its full sequence is Extracellular cysteine protease (174 aa).

Catalysis depends on residues Cys24, His120, and Asn141.

The protein belongs to the peptidase C47 family. Proteolytically cleaved.

The protein resides in the secreted. Its subcellular location is the cell wall. Inhibited by heavy metal ions such as Zn(2+) or Ni(2+), iodoacetamide, N-ethylmaleimide, leupeptin, SDS and E-64. Also inhibited by chloromethylketones TPCK and TLCK and by human plasma inhibitor alpha-2-macroglobulin. Stimulated by L-cysteine. Functionally, cysteine protease able to cleave elastin, insulin, myoglobin, fibronectin, fibrinogen, HMW-kininogen, alpha-1-protease inhibitor and alpha-1-antitrypsin. Along with other extracellular proteases may contribute to the colonization and infection of human tissues. The sequence is that of Extracellular cysteine protease (ecpA) from Staphylococcus epidermidis.